We begin with the raw amino-acid sequence, 697 residues long: tRNA 5-methylaminomethyl-2-thiouridine biosynthesis bifunctional protein MnmC (697 aa).

Residues 1 to 275 (MTAKPHKSCQ…KPATLAAIDH (275 aa)) are tRNA (mnm(5)s(2)U34)-methyltransferase. Residues 280-697 (VGGGLASANL…LRKLLKGKAL (418 aa)) form an FAD-dependent cmnm(5)s(2)U34 oxidoreductase region.

The protein in the N-terminal section; belongs to the methyltransferase superfamily. tRNA (mnm(5)s(2)U34)-methyltransferase family. In the C-terminal section; belongs to the DAO family. The cofactor is FAD.

It localises to the cytoplasm. It carries out the reaction 5-aminomethyl-2-thiouridine(34) in tRNA + S-adenosyl-L-methionine = 5-methylaminomethyl-2-thiouridine(34) in tRNA + S-adenosyl-L-homocysteine + H(+). Functionally, catalyzes the last two steps in the biosynthesis of 5-methylaminomethyl-2-thiouridine (mnm(5)s(2)U) at the wobble position (U34) in tRNA. Catalyzes the FAD-dependent demodification of cmnm(5)s(2)U34 to nm(5)s(2)U34, followed by the transfer of a methyl group from S-adenosyl-L-methionine to nm(5)s(2)U34, to form mnm(5)s(2)U34. This is tRNA 5-methylaminomethyl-2-thiouridine biosynthesis bifunctional protein MnmC from Shewanella sp. (strain ANA-3).